A 394-amino-acid chain; its full sequence is RHOMBOID-like protein 4 (394 aa).

The disordered stretch occupies residues 1-51 (MGEKDSETAPIWGKTRERERSNNNNIQPMDLESSSSVSGQQRSLTQSRSSY). Residues 39-49 (GQQRSLTQSRS) show a composition bias toward polar residues. A run of 7 helical transmembrane segments spans residues 64–84 (WFPW…VITM), 147–167 (WLHG…FIGI), 175–195 (FIRI…LSAL), 201–221 (ISVG…SEIF), 231–251 (VVTI…GVLP), 254–274 (DNFA…VLLI), and 300–320 (ILWT…LISL). The Nucleophile role is filled by serine 206. The active-site Charge relay system is the histidine 258.

Belongs to the peptidase S54 family.

It localises to the membrane. It catalyses the reaction Cleaves type-1 transmembrane domains using a catalytic dyad composed of serine and histidine that are contributed by different transmembrane domains.. Its function is as follows. Probable rhomboid-type serine protease that catalyzes intramembrane proteolysis. This is RHOMBOID-like protein 4 from Arabidopsis thaliana (Mouse-ear cress).